A 382-amino-acid chain; its full sequence is S-adenosylmethionine synthase (382 aa).

H15 provides a ligand contact to ATP. Mg(2+) is bound at residue D17. K(+) is bound at residue E43. E56 and Q99 together coordinate L-methionine. The interval 99 to 109 is flexible loop; sequence QSPDINQGVDR. ATP contacts are provided by residues 164-166, 230-231, D239, 245-246, A262, and K266; these read DAK, RF, and RK. D239 lines the L-methionine pocket. K270 is an L-methionine binding site.

It belongs to the AdoMet synthase family. Homotetramer; dimer of dimers. Requires Mg(2+) as cofactor. It depends on K(+) as a cofactor.

The protein localises to the cytoplasm. The enzyme catalyses L-methionine + ATP + H2O = S-adenosyl-L-methionine + phosphate + diphosphate. The protein operates within amino-acid biosynthesis; S-adenosyl-L-methionine biosynthesis; S-adenosyl-L-methionine from L-methionine: step 1/1. Its function is as follows. Catalyzes the formation of S-adenosylmethionine (AdoMet) from methionine and ATP. The overall synthetic reaction is composed of two sequential steps, AdoMet formation and the subsequent tripolyphosphate hydrolysis which occurs prior to release of AdoMet from the enzyme. The protein is S-adenosylmethionine synthase of Glaesserella parasuis serovar 5 (strain SH0165) (Haemophilus parasuis).